The primary structure comprises 543 residues: Probable malate:quinone oxidoreductase (543 aa).

Belongs to the MQO family. FAD is required as a cofactor.

It carries out the reaction (S)-malate + a quinone = a quinol + oxaloacetate. It functions in the pathway carbohydrate metabolism; tricarboxylic acid cycle; oxaloacetate from (S)-malate (quinone route): step 1/1. This is Probable malate:quinone oxidoreductase from Acinetobacter baylyi (strain ATCC 33305 / BD413 / ADP1).